Consider the following 132-residue polypeptide: Small ribosomal subunit protein uS11 (132 aa).

This sequence belongs to the universal ribosomal protein uS11 family. Part of the 30S ribosomal subunit.

Its function is as follows. Located on the platform of the 30S subunit. The sequence is that of Small ribosomal subunit protein uS11 from Saccharolobus solfataricus (strain ATCC 35092 / DSM 1617 / JCM 11322 / P2) (Sulfolobus solfataricus).